Reading from the N-terminus, the 113-residue chain is Cytochrome c2 (113 aa).

The heme c site is built by C15, C18, H19, and M92.

It belongs to the cytochrome c family. In terms of processing, binds 1 heme c group covalently per subunit.

In terms of biological role, cytochrome c2 is found mainly in purple, non-sulfur, photosynthetic bacteria where it functions as the electron donor to the oxidized bacteriochlorophyll in the photophosphorylation pathway. However, it may also have a role in the respiratory chain and is found in some non-photosynthetic bacteria. This is Cytochrome c2 from Pararhodospirillum photometricum (Rhodospirillum photometricum).